The chain runs to 314 residues: Olfactory receptor 1C1 (314 aa).

Topologically, residues 1 to 25 (MEKRNLTVVREFVLLGLPSSAEQQH) are extracellular. The chain crosses the membrane as a helical span at residues 26-49 (LLSVLFLCMYLATTLGNMLIIATI). Over 50–57 (GFDSHLHS) the chain is Cytoplasmic. Residues 58–79 (PMYFFLSNLAFVDICFTSTTVP) form a helical membrane-spanning segment. The Extracellular segment spans residues 80-100 (QMVVNILTGTKTISFAGCLTQ). A disulfide bridge links cysteine 97 with cysteine 189. Residues 101 to 120 (LFFFVSFVNMDSLLLCVMAY) form a helical membrane-spanning segment. Residues 121–139 (DRYVAICHPLHYTARMNLC) are Cytoplasmic-facing. The helical transmembrane segment at 140 to 158 (LCVQLVAGLWLVTYLHALL) threads the bilayer. Over 159–195 (HTVLIAQLSFCASNIIHHFFCDLNPLLQLSCSDVSFN) the chain is Extracellular. Residues 196-219 (VMIIFAVGGLLALTPLVCILVSYG) traverse the membrane as a helical segment. The Cytoplasmic segment spans residues 220-236 (LIFSTVLKITSTQGKQR). The chain crosses the membrane as a helical span at residues 237-259 (AVSTCSCHLSVVVLFYGTAIAVY). The Extracellular portion of the chain corresponds to 260–272 (FSPSSPHMPESDT). A helical membrane pass occupies residues 273–292 (LSTIMYSMVAPMLNPFIYTL). Over 293–314 (RNRDMKRGLQKMLLKCTVFQQQ) the chain is Cytoplasmic.

This sequence belongs to the G-protein coupled receptor 1 family.

It is found in the cell membrane. Functionally, odorant receptor. The chain is Olfactory receptor 1C1 (OR1C1) from Homo sapiens (Human).